A 127-amino-acid chain; its full sequence is Ribosome-binding factor A (127 aa).

The protein belongs to the RbfA family. In terms of assembly, monomer. Binds 30S ribosomal subunits, but not 50S ribosomal subunits or 70S ribosomes.

Its subcellular location is the cytoplasm. Its function is as follows. One of several proteins that assist in the late maturation steps of the functional core of the 30S ribosomal subunit. Associates with free 30S ribosomal subunits (but not with 30S subunits that are part of 70S ribosomes or polysomes). Required for efficient processing of 16S rRNA. May interact with the 5'-terminal helix region of 16S rRNA. The protein is Ribosome-binding factor A of Stenotrophomonas maltophilia (strain K279a).